We begin with the raw amino-acid sequence, 93 residues long: Putative pterin-4-alpha-carbinolamine dehydratase (93 aa).

This sequence belongs to the pterin-4-alpha-carbinolamine dehydratase family.

It carries out the reaction (4aS,6R)-4a-hydroxy-L-erythro-5,6,7,8-tetrahydrobiopterin = (6R)-L-erythro-6,7-dihydrobiopterin + H2O. The sequence is that of Putative pterin-4-alpha-carbinolamine dehydratase from Roseiflexus castenholzii (strain DSM 13941 / HLO8).